Consider the following 366-residue polypeptide: Transcription initiation factor IIA subunit 1 (366 aa).

Disordered regions lie at residues 56 to 82 (LSPD…AANA), 133 to 162 (EVNS…SSGQ), and 257 to 317 (QLDG…DSAE). Over residues 146 to 162 (SAASMMQKQQQAASSGQ) the composition is skewed to low complexity. A compositionally biased stretch (acidic residues) spans 264–317 (SSDEDESEESDDNIDNDDDDDLDKDDDEDAEHEDAAEEEPLNSEDDVTDEDSAE). Residues Ser265 and Ser306 each carry the phosphoserine; by TAF1 modification.

Belongs to the TFIIA subunit 1 family. Belongs to the TFIID complex which is composed of TATA binding protein (Tbp) and a number of TBP-associated factors (Tafs). TFIIA is a heterodimer of a unprocessed large subunit 1 and a small subunit gamma. It was originally believed to be a heterotrimer of an alpha (p30), a beta (p20) and a gamma subunit (p14). Interacts with Tbp. Taf4 interacts with TFIIA-L when TFIIA-L is in complex with Tbp. In terms of processing, the precursor form (48 kDa) is cleaved to give rise to the alpha (30 kDa) and beta (20 kDa) subunits.

The protein resides in the nucleus. Functionally, TFIIA is a component of the transcription machinery of RNA polymerase II and plays an important role in transcriptional activation. TFIIA in a complex with TBP mediates transcriptional activity. In Drosophila melanogaster (Fruit fly), this protein is Transcription initiation factor IIA subunit 1 (TfIIA-L).